Reading from the N-terminus, the 394-residue chain is Ornithine aminotransferase 1 (394 aa).

Residue Lys252 is modified to N6-(pyridoxal phosphate)lysine.

The protein belongs to the class-III pyridoxal-phosphate-dependent aminotransferase family. OAT subfamily. Requires pyridoxal 5'-phosphate as cofactor.

Its subcellular location is the cytoplasm. It catalyses the reaction a 2-oxocarboxylate + L-ornithine = L-glutamate 5-semialdehyde + an L-alpha-amino acid. It participates in amino-acid biosynthesis; L-proline biosynthesis; L-glutamate 5-semialdehyde from L-ornithine: step 1/1. Catalyzes the interconversion of ornithine to glutamate semialdehyde. The protein is Ornithine aminotransferase 1 of Staphylococcus aureus (strain Mu50 / ATCC 700699).